A 277-amino-acid polypeptide reads, in one-letter code: NH(3)-dependent NAD(+) synthetase (277 aa).

An ATP-binding site is contributed by 36–43 (GLSGGIDS). Asp42 is a Mg(2+) binding site. Arg118 provides a ligand contact to deamido-NAD(+). Thr138 contacts ATP. Glu143 contacts Mg(2+). Residues Lys167 and Ser189 each contribute to the ATP site.

Belongs to the NAD synthetase family. Homodimer.

The catalysed reaction is deamido-NAD(+) + NH4(+) + ATP = AMP + diphosphate + NAD(+) + H(+). It participates in cofactor biosynthesis; NAD(+) biosynthesis; NAD(+) from deamido-NAD(+) (ammonia route): step 1/1. Its function is as follows. Catalyzes the ATP-dependent amidation of deamido-NAD to form NAD. Uses ammonia as a nitrogen source. The sequence is that of NH(3)-dependent NAD(+) synthetase from Chlorobaculum parvum (strain DSM 263 / NCIMB 8327) (Chlorobium vibrioforme subsp. thiosulfatophilum).